The primary structure comprises 293 residues: 4-hydroxy-tetrahydrodipicolinate synthase (293 aa).

Residue T44 coordinates pyruvate. Residue Y132 is the Proton donor/acceptor of the active site. Catalysis depends on K161, which acts as the Schiff-base intermediate with substrate. Pyruvate is bound at residue I203.

It belongs to the DapA family. In terms of assembly, homotetramer; dimer of dimers.

The protein resides in the cytoplasm. It carries out the reaction L-aspartate 4-semialdehyde + pyruvate = (2S,4S)-4-hydroxy-2,3,4,5-tetrahydrodipicolinate + H2O + H(+). Its pathway is amino-acid biosynthesis; L-lysine biosynthesis via DAP pathway; (S)-tetrahydrodipicolinate from L-aspartate: step 3/4. Its function is as follows. Catalyzes the condensation of (S)-aspartate-beta-semialdehyde [(S)-ASA] and pyruvate to 4-hydroxy-tetrahydrodipicolinate (HTPA). This is 4-hydroxy-tetrahydrodipicolinate synthase from Persephonella marina (strain DSM 14350 / EX-H1).